A 693-amino-acid chain; its full sequence is Elongation factor G (693 aa).

Residues 6 to 286 (KYTRNIGIAA…AICRYLPSPI (281 aa)) form the tr-type G domain. Residues 15 to 22 (AHIDAGKT), 83 to 87 (DTPGH), and 137 to 140 (NKMD) each bind GTP.

Belongs to the TRAFAC class translation factor GTPase superfamily. Classic translation factor GTPase family. EF-G/EF-2 subfamily.

Its subcellular location is the cytoplasm. Catalyzes the GTP-dependent ribosomal translocation step during translation elongation. During this step, the ribosome changes from the pre-translocational (PRE) to the post-translocational (POST) state as the newly formed A-site-bound peptidyl-tRNA and P-site-bound deacylated tRNA move to the P and E sites, respectively. Catalyzes the coordinated movement of the two tRNA molecules, the mRNA and conformational changes in the ribosome. In Karelsulcia muelleri (strain GWSS) (Sulcia muelleri), this protein is Elongation factor G.